The chain runs to 156 residues: Small ribosomal subunit protein uS7 (156 aa).

The protein belongs to the universal ribosomal protein uS7 family. As to quaternary structure, part of the 30S ribosomal subunit. Contacts proteins S9 and S11.

In terms of biological role, one of the primary rRNA binding proteins, it binds directly to 16S rRNA where it nucleates assembly of the head domain of the 30S subunit. Is located at the subunit interface close to the decoding center, probably blocks exit of the E-site tRNA. This is Small ribosomal subunit protein uS7 from Prochlorococcus marinus subsp. pastoris (strain CCMP1986 / NIES-2087 / MED4).